The following is a 460-amino-acid chain: MEEPEEATQATQEAPLHVSQNIAKQVVNNENVFMKLVMTRMLDGKTEVIPLTTDVHNGFWRFGRHKSCEVVLNGPRVSNFHFEIYQGHRNDSDESENVVFLHDHSSNGTFLNFERLAKNSRTILSNGDEIRIGLGVPKDEISFLCQVPVKHSRDSQKNMIKSENSHYEIIRTLGSGTFAVVKLAVEVNSGKWYAIKIINKRKILLTSSEKRATEMFQREIDILKSLHHPGVVQCHEIFENDDELFIVMEYVEGGDLMDFLIANGSIDEQDCKPLLKQLLETLLHLHKQGVTHRDIKPENILITNDFHLKISDFGLAKVIHGTGTFLETFCGTMGYLAPEVLKSKNVNLDGGYDDKVDIWSLGCVLYVMLTASIPFASSSQAKCIELISKGAYPIEPLLENEISEEGIDLINRMLEINPEKRISESEALQHPWFYTVSTHEHRTPPSSSEHEATEQLNSSS.

Positions 60 to 116 (WRFGRHKSCEVVLNGPRVSNFHFEIYQGHRNDSDESENVVFLHDHSSNGTFLNFERL) constitute an FHA domain. A Protein kinase domain is found at 167-433 (YEIIRTLGSG…ESEALQHPWF (267 aa)). ATP-binding positions include 173–181 (LGSGTFAVV) and Lys196. The active-site Proton acceptor is the Asp294. The segment covering 438–453 (THEHRTPPSSSEHEAT) has biased composition (basic and acidic residues). The disordered stretch occupies residues 438–460 (THEHRTPPSSSEHEATEQLNSSS). Thr443 is subject to Phosphothreonine.

It belongs to the protein kinase superfamily. CAMK Ser/Thr protein kinase family. CHEK2 subfamily. In terms of assembly, interacts with rad26. In terms of processing, autophosphorylated.

It carries out the reaction L-seryl-[protein] + ATP = O-phospho-L-seryl-[protein] + ADP + H(+). It catalyses the reaction L-threonyl-[protein] + ATP = O-phospho-L-threonyl-[protein] + ADP + H(+). Its function is as follows. Has a role in the DNA replication-monitoring S/G2 checkpoint system. It is responsible for blocking mitosis in the S phase. It monitors DNA synthesis by interacting with DNA polymerase alpha and sends a signal to block the onset of mitosis while DNA synthesis is in progress. Phosphorylates rad60 and dna2. The polypeptide is Serine/threonine-protein kinase cds1 (cds1) (Schizosaccharomyces pombe (strain 972 / ATCC 24843) (Fission yeast)).